The following is a 361-amino-acid chain: Chorismate synthase (361 aa).

NADP(+) is bound by residues arginine 48 and arginine 54. FMN-binding positions include 125 to 127 (RSS), 238 to 239 (NA), glycine 278, 293 to 297 (KPTSS), and arginine 319.

This sequence belongs to the chorismate synthase family. In terms of assembly, homotetramer. The cofactor is FMNH2.

The catalysed reaction is 5-O-(1-carboxyvinyl)-3-phosphoshikimate = chorismate + phosphate. Its pathway is metabolic intermediate biosynthesis; chorismate biosynthesis; chorismate from D-erythrose 4-phosphate and phosphoenolpyruvate: step 7/7. In terms of biological role, catalyzes the anti-1,4-elimination of the C-3 phosphate and the C-6 proR hydrogen from 5-enolpyruvylshikimate-3-phosphate (EPSP) to yield chorismate, which is the branch point compound that serves as the starting substrate for the three terminal pathways of aromatic amino acid biosynthesis. This reaction introduces a second double bond into the aromatic ring system. The chain is Chorismate synthase from Klebsiella pneumoniae subsp. pneumoniae (strain ATCC 700721 / MGH 78578).